Here is a 106-residue protein sequence, read N- to C-terminus: Small ribosomal subunit protein uS10 (106 aa).

Belongs to the universal ribosomal protein uS10 family. Part of the 30S ribosomal subunit.

In terms of biological role, involved in the binding of tRNA to the ribosomes. The sequence is that of Small ribosomal subunit protein uS10 from Synechococcus sp. (strain CC9605).